The chain runs to 270 residues: Tryptophan synthase alpha chain (270 aa).

Active-site proton acceptor residues include E57 and D68.

It belongs to the TrpA family. As to quaternary structure, tetramer of two alpha and two beta chains.

It carries out the reaction (1S,2R)-1-C-(indol-3-yl)glycerol 3-phosphate + L-serine = D-glyceraldehyde 3-phosphate + L-tryptophan + H2O. It participates in amino-acid biosynthesis; L-tryptophan biosynthesis; L-tryptophan from chorismate: step 5/5. Functionally, the alpha subunit is responsible for the aldol cleavage of indoleglycerol phosphate to indole and glyceraldehyde 3-phosphate. The chain is Tryptophan synthase alpha chain from Mycobacterium leprae (strain Br4923).